The following is a 585-amino-acid chain: ATP-dependent lipid A-core flippase (585 aa).

6 helical membrane passes run Leu-23 to Ile-43, Ile-64 to Thr-84, Ala-140 to Tyr-160, Trp-163 to Val-183, Ile-247 to Ile-267, and Phe-273 to Leu-293. Residues Val-27–Lys-308 enclose the ABC transmembrane type-1 domain. The ABC transporter domain occupies Leu-340–Leu-576. Gly-374–Ser-381 lines the ATP pocket.

It belongs to the ABC transporter superfamily. Lipid exporter (TC 3.A.1.106) family. In terms of assembly, homodimer.

Its subcellular location is the cell inner membrane. The enzyme catalyses ATP + H2O + lipid A-core oligosaccharideSide 1 = ADP + phosphate + lipid A-core oligosaccharideSide 2.. Its function is as follows. Involved in lipopolysaccharide (LPS) biosynthesis. Translocates lipid A-core from the inner to the outer leaflet of the inner membrane. Transmembrane domains (TMD) form a pore in the inner membrane and the ATP-binding domain (NBD) is responsible for energy generation. The chain is ATP-dependent lipid A-core flippase from Pseudoalteromonas atlantica (strain T6c / ATCC BAA-1087).